We begin with the raw amino-acid sequence, 277 residues long: Phosphoenolpyruvate synthase regulatory protein (277 aa).

An ADP-binding site is contributed by 157-164; sequence GVSRCGKT.

This sequence belongs to the pyruvate, phosphate/water dikinase regulatory protein family. PSRP subfamily.

The catalysed reaction is [pyruvate, water dikinase] + ADP = [pyruvate, water dikinase]-phosphate + AMP + H(+). It carries out the reaction [pyruvate, water dikinase]-phosphate + phosphate + H(+) = [pyruvate, water dikinase] + diphosphate. Bifunctional serine/threonine kinase and phosphorylase involved in the regulation of the phosphoenolpyruvate synthase (PEPS) by catalyzing its phosphorylation/dephosphorylation. The protein is Phosphoenolpyruvate synthase regulatory protein of Shigella boydii serotype 4 (strain Sb227).